We begin with the raw amino-acid sequence, 214 residues long: Protein-L-isoaspartate O-methyltransferase (214 aa).

Serine 61 is a catalytic residue.

This sequence belongs to the methyltransferase superfamily. L-isoaspartyl/D-aspartyl protein methyltransferase family.

Its subcellular location is the cytoplasm. It carries out the reaction [protein]-L-isoaspartate + S-adenosyl-L-methionine = [protein]-L-isoaspartate alpha-methyl ester + S-adenosyl-L-homocysteine. Its function is as follows. Catalyzes the methyl esterification of L-isoaspartyl residues in peptides and proteins that result from spontaneous decomposition of normal L-aspartyl and L-asparaginyl residues. It plays a role in the repair and/or degradation of damaged proteins. This Paramagnetospirillum magneticum (strain ATCC 700264 / AMB-1) (Magnetospirillum magneticum) protein is Protein-L-isoaspartate O-methyltransferase.